We begin with the raw amino-acid sequence, 222 residues long: PKHD-type hydroxylase PCC8801_2196 (222 aa).

The Fe2OG dioxygenase domain occupies 78-175; that stretch reads RIHSLLFSRY…RLVVVGWIES (98 aa). The Fe cation site is built by His96, Asp98, and His156. Residue Arg166 coordinates 2-oxoglutarate.

Fe(2+) is required as a cofactor. L-ascorbate serves as cofactor.

The chain is PKHD-type hydroxylase PCC8801_2196 from Rippkaea orientalis (strain PCC 8801 / RF-1) (Cyanothece sp. (strain PCC 8801)).